An 86-amino-acid polypeptide reads, in one-letter code: MLIMLIQITGIIVVLMALRTLLAQDRAERLLYLNAMSFGISAMIALYVGTAFGAVLATVYFVASTITSNAIAHTLDRVGEEMVIED.

This sequence to M.jannaschii MJ0526.1.

This is an uncharacterized protein from Methanothermobacter thermautotrophicus (strain ATCC 29096 / DSM 1053 / JCM 10044 / NBRC 100330 / Delta H) (Methanobacterium thermoautotrophicum).